The chain runs to 247 residues: Protein-L-isoaspartate O-methyltransferase 2 (247 aa).

Ser97 is a catalytic residue.

This sequence belongs to the methyltransferase superfamily. L-isoaspartyl/D-aspartyl protein methyltransferase family.

Its subcellular location is the cytoplasm. The catalysed reaction is [protein]-L-isoaspartate + S-adenosyl-L-methionine = [protein]-L-isoaspartate alpha-methyl ester + S-adenosyl-L-homocysteine. Its function is as follows. Catalyzes the methyl esterification of L-isoaspartyl residues in peptides and proteins that result from spontaneous decomposition of normal L-aspartyl and L-asparaginyl residues. It plays a role in the repair and/or degradation of damaged proteins. This chain is Protein-L-isoaspartate O-methyltransferase 2, found in Syntrophobacter fumaroxidans (strain DSM 10017 / MPOB).